We begin with the raw amino-acid sequence, 325 residues long: Glutarate 2-hydroxylase (325 aa).

The Fe cation site is built by histidine 160, aspartate 162, and histidine 292.

It belongs to the glutarate hydroxylase family. Homotetramer. Fe(2+) is required as a cofactor.

The enzyme catalyses glutarate + 2-oxoglutarate + O2 = (S)-2-hydroxyglutarate + succinate + CO2. The protein operates within amino-acid degradation. Functionally, acts as an alpha-ketoglutarate-dependent dioxygenase catalyzing hydroxylation of glutarate (GA) to L-2-hydroxyglutarate (L2HG). Functions in a L-lysine degradation pathway that proceeds via cadaverine, glutarate and L-2-hydroxyglutarate. This is Glutarate 2-hydroxylase from Escherichia coli (strain 55989 / EAEC).